Here is an 80-residue protein sequence, read N- to C-terminus: Putative membrane protein insertion efficiency factor (80 aa).

Positions 61–80 (KTGKDPVPDRFSLKRNQEGE) are disordered. Positions 62–80 (TGKDPVPDRFSLKRNQEGE) are enriched in basic and acidic residues.

This sequence belongs to the UPF0161 family.

Its subcellular location is the cell membrane. Could be involved in insertion of integral membrane proteins into the membrane. The chain is Putative membrane protein insertion efficiency factor from Streptococcus pneumoniae (strain P1031).